Consider the following 389-residue polypeptide: Large ribosomal subunit protein uL3 (389 aa).

The tract at residues 1 to 36 (MSHRKFEHPRHGSLGFLPRKRSSRHRGKVKSFPKDD) is disordered. Over residues 18–31 (PRKRSSRHRGKVKS) the composition is skewed to basic residues.

Belongs to the universal ribosomal protein uL3 family.

Its subcellular location is the cytoplasm. In terms of biological role, the L3 protein is a component of the large subunit of cytoplasmic ribosomes. The polypeptide is Large ribosomal subunit protein uL3 (RPL3) (Oryza sativa subsp. japonica (Rice)).